A 541-amino-acid chain; its full sequence is Solute carrier family 22 member 10 (541 aa).

The Cytoplasmic portion of the chain corresponds to 1–15 (MAFEELLSQVGGLGR). A helical transmembrane segment spans residues 16–36 (FQMLHLVFILPSLMLLIPHIL). Over 37 to 145 (LENFAAAIPG…DLVCDYQSLK (109 aa)) the chain is Extracellular. N-linked (GlcNAc...) asparagine glycosylation is found at Asn56 and Asn102. Residues 146–166 (SVVQFLLLTGMLVGGIIGGHV) traverse the membrane as a helical segment. Residues 167 to 193 (SDRFGRRFILRWCLLQLAITDTCAAFA) lie on the Cytoplasmic side of the membrane. Residues 194–214 (PTFPVYCVLRFLAGFSSMIII) traverse the membrane as a helical segment. The Extracellular portion of the chain corresponds to 215-230 (SNNSLPITEWIRPNSK). Residues 231 to 251 (ALVVILSSGALSIGQIILGGL) traverse the membrane as a helical segment. At 252–259 (AYVFRDWQ) the chain is on the cytoplasmic side. The chain crosses the membrane as a helical span at residues 260 to 280 (TLHVVASVPFFVFFLLSRWLV). Topologically, residues 281–349 (ESARWLIITN…LFRNPSMRKR (69 aa)) are extracellular. A helical transmembrane segment spans residues 350 to 370 (ICILVFLRFANTIPFYGTMVN). Over 371-377 (LQHVGSN) the chain is Cytoplasmic. A helical transmembrane segment spans residues 378–398 (IFLLQVLYGAVALIVRCLALL). At 399-406 (TLNHMGRR) the chain is on the extracellular side. The chain crosses the membrane as a helical span at residues 407–427 (ISQILFMFLVGLSILANTFVP). Over 428 to 436 (KEMQTLRVA) the chain is Cytoplasmic. A helical transmembrane segment spans residues 437 to 457 (LACLGIGCSAATFSSVAVHFI). Residues 458–472 (ELIPTVLRARASGID) lie on the Extracellular side of the membrane. Residues 473–493 (LTASRIGAALAPLLMTLTVFF) form a helical membrane-spanning segment. Residues 494 to 495 (TT) lie on the Cytoplasmic side of the membrane. A helical transmembrane segment spans residues 496-516 (LPWIIYGIFPIIGGLIVFLLP). The Extracellular portion of the chain corresponds to 517–541 (ETKNLPLPDTIKDVENQKKNLKEKA).

The protein belongs to the major facilitator (TC 2.A.1) superfamily. Organic cation transporter (TC 2.A.1.19) family. Detected in fetal and adult liver, and in adult kidney.

The protein localises to the membrane. This Homo sapiens (Human) protein is Solute carrier family 22 member 10 (SLC22A10).